Consider the following 143-residue polypeptide: Ribosome-binding factor A (143 aa).

The disordered stretch occupies residues 123-143 (DNSLQENYKDSDKETKVEKLR).

This sequence belongs to the RbfA family. As to quaternary structure, monomer. Binds 30S ribosomal subunits, but not 50S ribosomal subunits or 70S ribosomes.

It is found in the cytoplasm. Functionally, one of several proteins that assist in the late maturation steps of the functional core of the 30S ribosomal subunit. Associates with free 30S ribosomal subunits (but not with 30S subunits that are part of 70S ribosomes or polysomes). Required for efficient processing of 16S rRNA. May interact with the 5'-terminal helix region of 16S rRNA. This is Ribosome-binding factor A from Francisella philomiragia subsp. philomiragia (strain ATCC 25017 / CCUG 19701 / FSC 153 / O#319-036).